The chain runs to 241 residues: UPF0280 protein MK0206 (241 aa).

This sequence belongs to the UPF0280 family.

The protein is UPF0280 protein MK0206 of Methanopyrus kandleri (strain AV19 / DSM 6324 / JCM 9639 / NBRC 100938).